We begin with the raw amino-acid sequence, 228 residues long: Deoxyribose-phosphate aldolase (228 aa).

The active-site Proton donor/acceptor is Asp93. The Schiff-base intermediate with acetaldehyde role is filled by Lys159. Lys188 functions as the Proton donor/acceptor in the catalytic mechanism.

Belongs to the DeoC/FbaB aldolase family. DeoC type 1 subfamily.

The protein localises to the cytoplasm. It catalyses the reaction 2-deoxy-D-ribose 5-phosphate = D-glyceraldehyde 3-phosphate + acetaldehyde. It participates in carbohydrate degradation; 2-deoxy-D-ribose 1-phosphate degradation; D-glyceraldehyde 3-phosphate and acetaldehyde from 2-deoxy-alpha-D-ribose 1-phosphate: step 2/2. Its function is as follows. Catalyzes a reversible aldol reaction between acetaldehyde and D-glyceraldehyde 3-phosphate to generate 2-deoxy-D-ribose 5-phosphate. This is Deoxyribose-phosphate aldolase from Carboxydothermus hydrogenoformans (strain ATCC BAA-161 / DSM 6008 / Z-2901).